A 183-amino-acid chain; its full sequence is Large ribosomal subunit protein uL6 (183 aa).

It belongs to the universal ribosomal protein uL6 family. Part of the 50S ribosomal subunit.

In terms of biological role, this protein binds to the 23S rRNA, and is important in its secondary structure. It is located near the subunit interface in the base of the L7/L12 stalk, and near the tRNA binding site of the peptidyltransferase center. This is Large ribosomal subunit protein uL6 from Chlamydia trachomatis serovar D (strain ATCC VR-885 / DSM 19411 / UW-3/Cx).